Reading from the N-terminus, the 281-residue chain is MKLAVITDSSADFAEKYKTYENLFVLDIPISIDGVDYDLQKISHEEWYDLMAEAQEVPKTSQPRVAELDRLLKDLEKQGYTHVLGLFLPAAISGFYQNIFYLQSEYEQMKVVFPETFITSSPLGYMVETVLDLAEAGVEFEEIIAKFEEQRDGDRAYMLVDDLHWLAKGGRLSNGAAVLGTLLNIKPVLTFSTEGKVEVFEKVRTVKKTMSRMKELLLKDAKDPLAYKVYVIHTRAEDRAQELYDYALSQGFDDVEIVTFGPVIATHLGLNTVAYGISPKK.

In terms of domain architecture, DegV spans leucine 3–proline 279. 2 residues coordinate hexadecanoate: threonine 60 and serine 93.

In terms of biological role, may bind long-chain fatty acids, such as palmitate, and may play a role in lipid transport or fatty acid metabolism. The chain is DegV domain-containing protein YqaC (yqaC) from Lactococcus lactis subsp. lactis (strain IL1403) (Streptococcus lactis).